The chain runs to 268 residues: Phosphatidylglycerol--prolipoprotein diacylglyceryl transferase (268 aa).

7 helical membrane-spanning segments follow: residues 23-43, 62-82, 97-117, 132-152, 179-199, 206-226, and 241-261; these read IGLR…RWLA, LLFN…VFFY, VWEG…AMIW, FVAP…FINL, SQLY…NIFI, ASVA…VEYV, and GQAL…WAYS. An a 1,2-diacyl-sn-glycero-3-phospho-(1'-sn-glycerol)-binding site is contributed by R145.

This sequence belongs to the Lgt family.

Its subcellular location is the cell inner membrane. It catalyses the reaction L-cysteinyl-[prolipoprotein] + a 1,2-diacyl-sn-glycero-3-phospho-(1'-sn-glycerol) = an S-1,2-diacyl-sn-glyceryl-L-cysteinyl-[prolipoprotein] + sn-glycerol 1-phosphate + H(+). It functions in the pathway protein modification; lipoprotein biosynthesis (diacylglyceryl transfer). Catalyzes the transfer of the diacylglyceryl group from phosphatidylglycerol to the sulfhydryl group of the N-terminal cysteine of a prolipoprotein, the first step in the formation of mature lipoproteins. This Haemophilus influenzae (strain PittEE) protein is Phosphatidylglycerol--prolipoprotein diacylglyceryl transferase.